The chain runs to 445 residues: Arginine/agmatine antiporter (445 aa).

The Cytoplasmic segment spans residues M1 to K9. A helical membrane pass occupies residues V10–L30. I23 is a binding site for agmatine. L-arginine contacts are provided by I23 and S26. The Periplasmic portion of the chain corresponds to L31–T38. Residues G39–V59 traverse the membrane as a helical segment. Topologically, residues Y60–W98 are cytoplasmic. Agmatine contacts are provided by A96, C97, and N101. A96 contributes to the L-arginine binding site. The helical transmembrane segment at I99–L119 threads the bilayer. Topologically, residues K120–P122 are periplasmic. The helical transmembrane segment at L123–G143 threads the bilayer. Topologically, residues P144–A152 are cytoplasmic. Residues V153 to F173 traverse the membrane as a helical segment. Residues K174 to T196 are Periplasmic-facing. Residues L197–V217 form a helical membrane-spanning segment. 2 residues coordinate L-arginine: W202 and I205. Residue I205 coordinates agmatine. At K218–P225 the chain is on the cytoplasmic side. The chain crosses the membrane as a helical span at residues I226 to I246. Over M247–G275 the chain is Periplasmic. The chain crosses the membrane as a helical span at residues A276–L296. W293 lines the agmatine pocket. Residues A297–K319 lie on the Cytoplasmic side of the membrane. A helical transmembrane segment spans residues A320 to S340. Over S341–S355 the chain is Periplasmic. A helical membrane pass occupies residues V356–G376. Position 357 (S357) interacts with L-arginine. Over H377–P385 the chain is Cytoplasmic. Residues L386–G406 form a helical membrane-spanning segment. Over A407 to K408 the chain is Periplasmic. The helical transmembrane segment at E409 to N429 threads the bilayer. Residues R430–D445 lie on the Cytoplasmic side of the membrane.

It belongs to the amino acid-polyamine-organocation (APC) superfamily. Basic amino acid/polyamine antiporter (APA) (TC 2.A.3.2) family. In terms of assembly, homodimer; each subunit has its own individual transport capacity.

The protein resides in the cell inner membrane. It catalyses the reaction agmatine(in) + L-arginine(out) = agmatine(out) + L-arginine(in). Functionally, major component of the acid-resistance (AR) system allowing enteric pathogens to survive the acidic environment in the stomach. Exchanges extracellular arginine for its intracellular decarboxylation product agmatine (Agm) thereby expelling intracellular protons. Probably undergoes several conformational states in order to translocate the substrate across the membrane; keeps the substrate accessible to only 1 side of the membrane at a time by opening and closing 3 membrane-internal gates. The polypeptide is Arginine/agmatine antiporter (adiC) (Salmonella typhi).